Here is a 177-residue protein sequence, read N- to C-terminus: Large ribosomal subunit protein uL6 (177 aa).

Residues 154-177 form a disordered region; that stretch reads PEPYKGKGVRYADEQVRRKEAKKK. The segment covering 155 to 171 has biased composition (basic and acidic residues); the sequence is EPYKGKGVRYADEQVRR.

Belongs to the universal ribosomal protein uL6 family. Part of the 50S ribosomal subunit.

Its function is as follows. This protein binds to the 23S rRNA, and is important in its secondary structure. It is located near the subunit interface in the base of the L7/L12 stalk, and near the tRNA binding site of the peptidyltransferase center. This chain is Large ribosomal subunit protein uL6, found in Alcanivorax borkumensis (strain ATCC 700651 / DSM 11573 / NCIMB 13689 / SK2).